The sequence spans 270 residues: Protein tonB2 (270 aa).

Residues 1–51 lie on the Cytoplasmic side of the membrane; that stretch reads MATPQPVDARTQPWRETPGGDLVALGRPVRQALHLVRHNPAQGRVLSRRET. Residues 52–69 form a helical membrane-spanning segment; it reads ILLVLFALTLHGAVIHWL. Over 70-270 the chain is Periplasmic; the sequence is SQQRTPALPE…VSVPIDFKLN (201 aa). Residues 80-187 are disordered; the sequence is VPPQVPPMTI…LTPPSANAGY (108 aa). The span at 94 to 118 shows a compositional bias: pro residues; it reads PAPPVVEPPPPEPLPPVVEEPPPPV. The span at 133–143 shows a compositional bias: basic residues; the sequence is PKPKPKPKPQP. The segment covering 144 to 180 has biased composition (pro residues); it reads RPKPAPKAVEPAPPAPPQPAAPPAPPAPAAAPAPLTP. In terms of domain architecture, TonB C-terminal spans 180 to 270; it reads PPSANAGYLH…VSVPIDFKLN (91 aa).

The protein belongs to the TonB family. Homodimer. Forms a complex with the accessory proteins ExbB and ExbD.

It is found in the cell inner membrane. Its function is as follows. Interacts with outer membrane receptor proteins that carry out high-affinity binding and energy dependent uptake into the periplasmic space of specific substrates. It could act to transduce energy from the cytoplasmic membrane to specific energy-requiring processes in the outer membrane, resulting in the release into the periplasm of ligands bound by these outer membrane proteins. The protein is Protein tonB2 (tonB2) of Pseudomonas aeruginosa (strain ATCC 15692 / DSM 22644 / CIP 104116 / JCM 14847 / LMG 12228 / 1C / PRS 101 / PAO1).